The chain runs to 314 residues: Ribonuclease Z (314 aa).

Zn(2+)-binding residues include His-62, His-64, Asp-66, His-67, His-139, Asp-210, and His-268. The active-site Proton acceptor is the Asp-66.

Belongs to the RNase Z family. In terms of assembly, homodimer. Zn(2+) is required as a cofactor.

The enzyme catalyses Endonucleolytic cleavage of RNA, removing extra 3' nucleotides from tRNA precursor, generating 3' termini of tRNAs. A 3'-hydroxy group is left at the tRNA terminus and a 5'-phosphoryl group is left at the trailer molecule.. Zinc phosphodiesterase, which displays some tRNA 3'-processing endonuclease activity. Probably involved in tRNA maturation, by removing a 3'-trailer from precursor tRNA. The chain is Ribonuclease Z from Rippkaea orientalis (strain PCC 8801 / RF-1) (Cyanothece sp. (strain PCC 8801)).